We begin with the raw amino-acid sequence, 326 residues long: S-methyl-5'-thioadenosine phosphorylase (326 aa).

Residues S44, 86–87 (RH), and 119–120 (SA) each bind phosphate. Substrate is bound at residue M220. Residue T221 coordinates phosphate. 244–246 (DYD) lines the substrate pocket.

Belongs to the PNP/MTAP phosphorylase family. MTAP subfamily. As to quaternary structure, homohexamer. Dimer of a homotrimer.

The enzyme catalyses S-methyl-5'-thioadenosine + phosphate = 5-(methylsulfanyl)-alpha-D-ribose 1-phosphate + adenine. Its pathway is amino-acid biosynthesis; L-methionine biosynthesis via salvage pathway; S-methyl-5-thio-alpha-D-ribose 1-phosphate from S-methyl-5'-thioadenosine (phosphorylase route): step 1/1. Its function is as follows. Catalyzes the reversible phosphorylation of S-methyl-5'-thioadenosine (MTA) to adenine and 5-methylthioribose-1-phosphate. Involved in the breakdown of MTA, a major by-product of polyamine biosynthesis. Responsible for the first step in the methionine salvage pathway after MTA has been generated from S-adenosylmethionine. Has broad substrate specificity with 6-aminopurine nucleosides as preferred substrates. The polypeptide is S-methyl-5'-thioadenosine phosphorylase (Synechocystis sp. (strain PCC 6803 / GT-S)).